A 462-amino-acid chain; its full sequence is tRNA modification GTPase MnmE (462 aa).

3 residues coordinate (6S)-5-formyl-5,6,7,8-tetrahydrofolate: Arg27, Glu89, and Arg128. One can recognise a TrmE-type G domain in the interval 224–383; sequence GLATAIVGRP…LDERIAKLFF (160 aa). A K(+)-binding site is contributed by Asn234. GTP contacts are provided by residues 234 to 239, 253 to 259, and 278 to 281; these read NVGKSS, TDVAGTT, and DTAG. Ser238 lines the Mg(2+) pocket. Thr253, Val255, and Thr258 together coordinate K(+). Mg(2+) is bound at residue Thr259. Lys462 contacts (6S)-5-formyl-5,6,7,8-tetrahydrofolate.

Belongs to the TRAFAC class TrmE-Era-EngA-EngB-Septin-like GTPase superfamily. TrmE GTPase family. As to quaternary structure, homodimer. Heterotetramer of two MnmE and two MnmG subunits. K(+) is required as a cofactor.

Its subcellular location is the cytoplasm. In terms of biological role, exhibits a very high intrinsic GTPase hydrolysis rate. Involved in the addition of a carboxymethylaminomethyl (cmnm) group at the wobble position (U34) of certain tRNAs, forming tRNA-cmnm(5)s(2)U34. The sequence is that of tRNA modification GTPase MnmE from Lacticaseibacillus paracasei (strain ATCC 334 / BCRC 17002 / CCUG 31169 / CIP 107868 / KCTC 3260 / NRRL B-441) (Lactobacillus paracasei).